Here is a 541-residue protein sequence, read N- to C-terminus: Putative transferase YhbX (541 aa).

Residues 1 to 60 (MTVFNKFARSFKSHWLLYLSVIVFGITNLVASSGAHMVQRLLFFVLTILVVKRISSLPLR) lie on the Periplasmic side of the membrane. A helical transmembrane segment spans residues 61-81 (LLVAAPFVLLTAADMSISLYS). Residues 82 to 110 (WCTFGTTFNDGFAISVLQSDPDEVAKMLG) lie on the Cytoplasmic side of the membrane. A helical transmembrane segment spans residues 111-131 (MYSPYLCAFAFLSLLFLAVII). Residues 132 to 141 (KYDVSLPTKK) are Periplasmic-facing. Residues 142–162 (VTGILLLIVISGSLFSACQFA) form a helical membrane-spanning segment. Topologically, residues 163–264 (YKDAKNKNAF…RKQIKLFNQA (102 aa)) are cytoplasmic. A helical membrane pass occupies residues 265–285 (ISGAPYTALSVPLSLTADSVL). Residues 286 to 541 (SHDIHNYPDN…QGNPTPEGQG (256 aa)) lie on the Periplasmic side of the membrane.

It belongs to the phosphoethanolamine transferase family.

The protein localises to the cell inner membrane. There are several lipid A forms in this strain, including a phosphoethanolamine (1-O-P-pEtN) form; overexpression of this gene does not lead to higher levels of the 1-O-P-pEtN form of lipid A. The polypeptide is Putative transferase YhbX (yhbX) (Escherichia coli O157:H7).